The primary structure comprises 129 residues: Antimicrobial peptide NK-lysin (129 aa).

The first 6 residues, 1–6, serve as a signal peptide directing secretion; that stretch reads PGLAFS. The propeptide occupies 7 to 46; the sequence is GLTPEHSALARAHPCDGEQFCQNLAPEDPQGDQLLQREEL. The region spanning 46–126 is the Saposin B-type domain; it reads LGLICESCRK…VDIKICKEKT (81 aa). 3 disulfide bridges follow: Cys50–Cys122, Cys53–Cys116, and Cys81–Cys91. Residues 125 to 129 constitute a propeptide that is removed on maturation; that stretch reads KTGLI.

Cytotoxic T and NK cells.

The protein localises to the secreted. Its function is as follows. May be an effector molecule of cytotoxic activity. High activity against E.coli and B.megaterium, moderate against A.calcoaceticus and S.pyogenes. No activity against P.aeruginosa, S.aureus and Salmonella. Has some antifungal activity against C.albicans. This Sus scrofa (Pig) protein is Antimicrobial peptide NK-lysin (NKL).